We begin with the raw amino-acid sequence, 423 residues long: Aspartate--tRNA(Asp) ligase (423 aa).

Glu163 is an L-aspartate binding site. Residues 185–188 (QLYK) are aspartate. Arg207 provides a ligand contact to L-aspartate. Residues 207–209 (RAE), 215–217 (RHL), and Glu346 contribute to the ATP site. Residues Glu346 and Ser349 each coordinate Mg(2+). Positions 349 and 353 each coordinate L-aspartate. 394–397 (GLER) serves as a coordination point for ATP.

It belongs to the class-II aminoacyl-tRNA synthetase family. Type 2 subfamily. Homodimer. Mg(2+) serves as cofactor.

The protein resides in the cytoplasm. The catalysed reaction is tRNA(Asp) + L-aspartate + ATP = L-aspartyl-tRNA(Asp) + AMP + diphosphate. Its function is as follows. Catalyzes the attachment of L-aspartate to tRNA(Asp) in a two-step reaction: L-aspartate is first activated by ATP to form Asp-AMP and then transferred to the acceptor end of tRNA(Asp). This chain is Aspartate--tRNA(Asp) ligase, found in Picrophilus torridus (strain ATCC 700027 / DSM 9790 / JCM 10055 / NBRC 100828 / KAW 2/3).